Consider the following 382-residue polypeptide: Lipid-A-disaccharide synthase (382 aa).

It belongs to the LpxB family.

It catalyses the reaction 2-N,3-O-bis[(3R)-3-hydroxytetradecanoyl]-alpha-D-glucosaminyl 1-phosphate + UDP-2-N,3-O-bis[(3R)-3-hydroxytetradecanoyl]-alpha-D-glucosamine = lipid A disaccharide (E. coli) + UDP + H(+). The enzyme catalyses a lipid X + a UDP-2-N,3-O-bis[(3R)-3-hydroxyacyl]-alpha-D-glucosamine = a lipid A disaccharide + UDP + H(+). It participates in glycolipid biosynthesis; lipid IV(A) biosynthesis; lipid IV(A) from (3R)-3-hydroxytetradecanoyl-[acyl-carrier-protein] and UDP-N-acetyl-alpha-D-glucosamine: step 5/6. Condensation of UDP-2,3-diacylglucosamine and 2,3-diacylglucosamine-1-phosphate to form lipid A disaccharide, a precursor of lipid A, a phosphorylated glycolipid that anchors the lipopolysaccharide to the outer membrane of the cell. The polypeptide is Lipid-A-disaccharide synthase (Escherichia coli (strain SMS-3-5 / SECEC)).